Reading from the N-terminus, the 463-residue chain is Putative pentatricopeptide repeat-containing protein At4g17915 (463 aa).

PPR repeat units lie at residues 12–46 (STRLLNICVDSLCKFRKLEKAESLIIDGIRLGVDP), 47–81 (DVVTYNTLISGYCRFVGIEEAYAVTRRMRDAGIRP), 82–116 (DVATYNSLIAGAARRLMLDHVLYLFDEMLEWGIYP), 117–152 (DLWSYNTLMCCYFKLGKHEEAFRVLYKDLQLAGLNP), 153–186 (GPDTYNVLLDALCKCGYIDNALELFKEMQSRFKP), 187–221 (ELMTYNILINGLCKSRRVGTAKWMLTELKKSGYTP), 222–256 (NAVTYTTILKLYFKTRRIRRGLQLFLEMKREGYTY), 257–291 (DGYAYFAVVSALIKTGRTKEAYEYMQELVRKGRRH), 292–326 (DIVSYNTLLNLYFKDGNLDAVDDLLGEIERRGMKA), 327–361 (DEYTHTIIVNGLLRTGQTRRAEEHFVSMGEMGIGL), 362–392 (NLVTCNCLVDGLCKAGHVDRAMRYFESMEVK), and 393–427 (DEYTYTSVVHNLCKDMRFVCASKLLLSCYNKGIKI).

It belongs to the PPR family. P subfamily.

The sequence is that of Putative pentatricopeptide repeat-containing protein At4g17915 from Arabidopsis thaliana (Mouse-ear cress).